We begin with the raw amino-acid sequence, 713 residues long: Forkhead box protein P2 (713 aa).

Over residues 1 to 28 (MMQESVTETISNSSMNQNGMSTLSSQLD) the composition is skewed to polar residues. Disordered stretches follow at residues 1–44 (MMQE…SSEV) and 279–337 (DNGI…TGAS). The span at 290-303 (TTNNSSSTTSSTTS) shows a compositional bias: low complexity. Residues 313-322 (SIVNGQSSVL) are compositionally biased toward polar residues. Positions 324-335 (ARRDSSSHEETG) are enriched in basic and acidic residues. Residues 344-369 (GVCKWPGCESICEDFGQFLKHLNNEH) form a C2H2-type zinc finger. Residues 386-407 (VQQLEIQLSKERERLQAMMTHL) are leucine-zipper. The tract at residues 420–424 (PLNLV) is CTBP1-binding. Low complexity predominate over residues 436 to 457 (TSPQSLPQTPTTPTAPVTPITQ). Residues 436-463 (TSPQSLPQTPTTPTAPVTPITQGPSVIT) are disordered. The segment at residues 502–592 (RPPFTYATLI…SQKITGSPTL (91 aa)) is a DNA-binding region (fork-head). Disordered regions lie at residues 647 to 666 (LDHI…QPHI) and 676 to 713 (VIAE…EDLE). The segment covering 697–713 (LEDDREIEEEPLSEDLE) has biased composition (acidic residues).

As to quaternary structure, forms homodimers and heterodimers with FOXP1 and FOXP4. Dimerization is required for DNA-binding. Interacts with CTBP1. Interacts with FOXP1. Interacts with TBR1. Interacts with ZMYM2.

The protein localises to the nucleus. In terms of biological role, transcriptional repressor that may play a role in the specification and differentiation of lung epithelium. May also play a role in developing neural, gastrointestinal and cardiovascular tissues. Can act with CTBP1 to synergistically repress transcription but CTPBP1 is not essential. Plays a role in synapse formation by regulating SRPX2 levels. The polypeptide is Forkhead box protein P2 (FOXP2) (Pongo pygmaeus (Bornean orangutan)).